The primary structure comprises 196 residues: uncharacterized protein (196 aa).

This sequence belongs to the CDP-alcohol phosphatidyltransferase class-I family.

This is an uncharacterized protein from Aquifex aeolicus (strain VF5).